The sequence spans 100 residues: NAD(P)H-quinone oxidoreductase subunit 4L, chloroplastic (100 aa).

Helical transmembrane passes span 1-21 (MIEN…YGLI), 27-47 (IKVL…LVAF), and 61-81 (FAVF…AIVF).

This sequence belongs to the complex I subunit 4L family. As to quaternary structure, NDH is composed of at least 16 different subunits, 5 of which are encoded in the nucleus.

The protein localises to the plastid. Its subcellular location is the chloroplast thylakoid membrane. The enzyme catalyses a plastoquinone + NADH + (n+1) H(+)(in) = a plastoquinol + NAD(+) + n H(+)(out). It carries out the reaction a plastoquinone + NADPH + (n+1) H(+)(in) = a plastoquinol + NADP(+) + n H(+)(out). Functionally, NDH shuttles electrons from NAD(P)H:plastoquinone, via FMN and iron-sulfur (Fe-S) centers, to quinones in the photosynthetic chain and possibly in a chloroplast respiratory chain. The immediate electron acceptor for the enzyme in this species is believed to be plastoquinone. Couples the redox reaction to proton translocation, and thus conserves the redox energy in a proton gradient. The polypeptide is NAD(P)H-quinone oxidoreductase subunit 4L, chloroplastic (Chaetosphaeridium globosum (Charophycean green alga)).